The following is a 263-amino-acid chain: uncharacterized protein (263 aa).

ATP is bound at residue 12 to 19 (KGGVGKTT).

It belongs to the ParA family. MinD subfamily.

This is an uncharacterized protein from Methanocaldococcus jannaschii (strain ATCC 43067 / DSM 2661 / JAL-1 / JCM 10045 / NBRC 100440) (Methanococcus jannaschii).